A 311-amino-acid polypeptide reads, in one-letter code: MSRYTPSEFAHQIGTGLLSFPVTHFKSDLSFDEAAYRANLSWLFSHEAAGLFAAGGTGEFFSLTPAETDRVVRAAVAETGGRLPVIAPAGYGTAMAKEYCQAAEAAGADGILLLPPYLTEASADGVAAHVEQVCKSTRLGVIVYNRANQVLDENHLERLAERCPNLVGFKDGVGDLELMTRIYSRLGERFTYIGGLPTAETFAMPYLTMGVTTYSSAIFNFVPKFALDFYAAVRAADHAKAYAMLNDFVLPYIALRNRKRGYAVSIVKAGMKVIGRSAGPVRAPLTDLTEAELAELSALVARIADVQKLAA.

It belongs to the DapA family.

It carries out the reaction 5-dehydro-4-deoxy-D-glucarate + H(+) = 2,5-dioxopentanoate + CO2 + H2O. It participates in carbohydrate acid metabolism; D-glucarate degradation; 2,5-dioxopentanoate from D-glucarate: step 2/2. The polypeptide is Probable 5-dehydro-4-deoxyglucarate dehydratase (Ralstonia nicotianae (strain ATCC BAA-1114 / GMI1000) (Ralstonia solanacearum)).